The sequence spans 190 residues: Peptidyl-tRNA hydrolase (190 aa).

Phe-14 contributes to the tRNA binding site. His-19 acts as the Proton acceptor in catalysis. The tRNA site is built by Met-64, Asn-66, and Asn-112.

Belongs to the PTH family. Monomer.

The protein localises to the cytoplasm. The enzyme catalyses an N-acyl-L-alpha-aminoacyl-tRNA + H2O = an N-acyl-L-amino acid + a tRNA + H(+). Its function is as follows. Hydrolyzes ribosome-free peptidyl-tRNAs (with 1 or more amino acids incorporated), which drop off the ribosome during protein synthesis, or as a result of ribosome stalling. Catalyzes the release of premature peptidyl moieties from peptidyl-tRNA molecules trapped in stalled 50S ribosomal subunits, and thus maintains levels of free tRNAs and 50S ribosomes. This chain is Peptidyl-tRNA hydrolase, found in Staphylococcus haemolyticus (strain JCSC1435).